The chain runs to 359 residues: sn-1 acyl-lipid omega-3 desaturase (ferredoxin) (359 aa).

Residues 1 to 15 (MQLDTISFNNPLNSE) show a composition bias toward polar residues. The disordered stretch occupies residues 1-20 (MQLDTISFNNPLNSETSEDT). 2 helical membrane-spanning segments follow: residues 47 to 67 (LFYF…ASYL) and 70 to 90 (WLFF…LFVV). Residues 92-96 (HDCGH) carry the Histidine box-1 motif. A Histidine box-2 motif is present at residues 128–132 (HRTHH). 2 helical membrane passes run 207 to 227 (VLLI…GWMW) and 228 to 248 (LLKY…LVTF). The Histidine box-3 signature appears at 294–298 (HHIFL).

The protein belongs to the fatty acid desaturase type 2 family. Requires Fe(2+) as cofactor.

The protein resides in the membrane. The catalysed reaction is a 1-[(9Z,12Z)-octadecdienoyl]-2-acyl-glycerolipid + 2 reduced [2Fe-2S]-[ferredoxin] + O2 + 2 H(+) = a 1-[(9Z,12Z,15Z)-octadectrienoyl]-2-acyl-glycerolipid + 2 oxidized [2Fe-2S]-[ferredoxin] + 2 H2O. The enzyme catalyses a 1-[(6Z,9Z,12Z)-octadectrienoyl]-2-acyl-glycerolipid + 2 reduced [2Fe-2S]-[ferredoxin] + O2 + 2 H(+) = a 1-[(6Z,9Z,12Z,15Z)-octadectetraenoyl]-2-acyl-glycerolipid + 2 oxidized [2Fe-2S]-[ferredoxin] + 2 H2O. Its pathway is lipid metabolism; polyunsaturated fatty acid biosynthesis. Its function is as follows. Desaturase involved in fatty acid biosynthesis. Introduces a double bond at carbon 15 of linoleoyl and gamma-linolenoyl groups attached to the sn-1 position of the glycerol moiety of membrane glycerolipids. The polypeptide is sn-1 acyl-lipid omega-3 desaturase (ferredoxin) (Nostoc sp. (strain 36)).